The sequence spans 114 residues: MKKSYRIKKESDFQRVFETHNSVANHKFVIYQMQKPNQPHFRVGISVGKKVGNAVQRGWVKRRIRQTLLEVKPELKQDVDFLVIARKSAADLSMKEIKKNLVHALTLAHLFEEK.

This sequence belongs to the RnpA family. Consists of a catalytic RNA component (M1 or rnpB) and a protein subunit.

The enzyme catalyses Endonucleolytic cleavage of RNA, removing 5'-extranucleotides from tRNA precursor.. Functionally, RNaseP catalyzes the removal of the 5'-leader sequence from pre-tRNA to produce the mature 5'-terminus. It can also cleave other RNA substrates such as 4.5S RNA. The protein component plays an auxiliary but essential role in vivo by binding to the 5'-leader sequence and broadening the substrate specificity of the ribozyme. The polypeptide is Ribonuclease P protein component (Limosilactobacillus fermentum (strain NBRC 3956 / LMG 18251) (Lactobacillus fermentum)).